The chain runs to 306 residues: D-alanine--D-alanine ligase (306 aa).

The ATP-grasp domain maps to 107-300 (KAAYRTAGLP…FGQLCAWLVE (194 aa)). 134-184 (IAPPYVVKPNNEGSSVGIYIVHEATNSPPQLSEEMPAQVMVEAYAPGREMT) contributes to the ATP binding site. The Mg(2+) site is built by Asp251, Glu267, and Asn269.

It belongs to the D-alanine--D-alanine ligase family. Mg(2+) is required as a cofactor. It depends on Mn(2+) as a cofactor.

The protein resides in the cytoplasm. It carries out the reaction 2 D-alanine + ATP = D-alanyl-D-alanine + ADP + phosphate + H(+). Its pathway is cell wall biogenesis; peptidoglycan biosynthesis. In terms of biological role, cell wall formation. This chain is D-alanine--D-alanine ligase, found in Ruegeria sp. (strain TM1040) (Silicibacter sp.).